The chain runs to 181 residues: Lysozyme C (181 aa).

Residues 1–19 (MRIAFFLLILSIIVGLAYG) form the signal peptide. A propeptide spanning residues 139–181 (LTDSRPLGPFNVTEEEMDQLFIDHEIAMAQCEAEKTCNGFDLE) is cleaved from the precursor.

The protein belongs to the dictyostelium lysozyme family. In terms of processing, contains six disulfide bonds.

The protein localises to the cytoplasmic vesicle lumen. The catalysed reaction is Hydrolysis of (1-&gt;4)-beta-linkages between N-acetylmuramic acid and N-acetyl-D-glucosamine residues in a peptidoglycan and between N-acetyl-D-glucosamine residues in chitodextrins.. Has antibacterial activity. In Dictyostelium discoideum (Social amoeba), this protein is Lysozyme C (alyC).